The following is a 138-amino-acid chain: uncharacterized protein (138 aa).

Transmembrane regions (helical) follow at residues 17–37, 43–63, and 117–137; these read LIVSTIYIVLFFAILNLTVFF, INLILKNSCVVSFVVVWLLVC, and FWWMNFSLYLLGSLISIVVSL.

It localises to the cell membrane. This is an uncharacterized protein from Mycoplasma pneumoniae (strain ATCC 29342 / M129 / Subtype 1) (Mycoplasmoides pneumoniae).